We begin with the raw amino-acid sequence, 469 residues long: Glutamate--tRNA ligase 1 (469 aa).

Positions 11–21 (PSPTGHLHLGG) match the 'HIGH' region motif. The 'KMSKS' region motif lies at 238–242 (KLSKR). Lysine 241 contributes to the ATP binding site.

Belongs to the class-I aminoacyl-tRNA synthetase family. Glutamate--tRNA ligase type 1 subfamily. As to quaternary structure, monomer.

Its subcellular location is the cytoplasm. The catalysed reaction is tRNA(Glu) + L-glutamate + ATP = L-glutamyl-tRNA(Glu) + AMP + diphosphate. Functionally, catalyzes the attachment of glutamate to tRNA(Glu) in a two-step reaction: glutamate is first activated by ATP to form Glu-AMP and then transferred to the acceptor end of tRNA(Glu). The polypeptide is Glutamate--tRNA ligase 1 (Ehrlichia canis (strain Jake)).